The following is a 353-amino-acid chain: Phosphoribosylformylglycinamidine cyclo-ligase (353 aa).

The protein belongs to the AIR synthase family.

Its subcellular location is the cytoplasm. The catalysed reaction is 2-formamido-N(1)-(5-O-phospho-beta-D-ribosyl)acetamidine + ATP = 5-amino-1-(5-phospho-beta-D-ribosyl)imidazole + ADP + phosphate + H(+). Its pathway is purine metabolism; IMP biosynthesis via de novo pathway; 5-amino-1-(5-phospho-D-ribosyl)imidazole from N(2)-formyl-N(1)-(5-phospho-D-ribosyl)glycinamide: step 2/2. This Pseudomonas aeruginosa (strain ATCC 15692 / DSM 22644 / CIP 104116 / JCM 14847 / LMG 12228 / 1C / PRS 101 / PAO1) protein is Phosphoribosylformylglycinamidine cyclo-ligase.